The primary structure comprises 582 residues: Potassium voltage-gated channel subfamily KQT member 1 (582 aa).

The Cytoplasmic segment spans residues 1-31; it reads RVSIYSARRPLLARTHIQGRVYNFLERPTGW. The chain crosses the membrane as a helical span at residues 32 to 53; it reads KCFVYHFAVFLIVLVCLIFSVL. Topologically, residues 54–64 are extracellular; that stretch reads STIEQYVALAT. Residues 65–87 form a helical membrane-spanning segment; it reads GTLFWMEIVLVVFFGTEYVVRLW. Residues 88–103 lie on the Cytoplasmic side of the membrane; the sequence is SAGCRSKYVGVWGRLR. A helical membrane pass occupies residues 104-129; the sequence is FARKPISIIDLIVVLASMVVLCVGSK. The Extracellular portion of the chain corresponds to 130–137; it reads GQVFATSA. The chain crosses the membrane as a helical; Voltage-sensor span at residues 138-153; it reads IRGIRFLQILRMLHVD. An interaction with KCNE3 region spans residues 149-157; the sequence is MLHVDRQGG. Residues 154-171 lie on the Cytoplasmic side of the membrane; sequence RQGGTWRLLGSVVFIHRQ. Glutamine 155 lines the a 1,2-diacyl-sn-glycero-3-phospho-(1D-myo-inositol-4,5-bisphosphate) pocket. Residues 172–194 traverse the membrane as a helical segment; that stretch reads ELITTLYIGFLGLIFSSYFVYLA. Residues 195-210 lie on the Extracellular side of the membrane; sequence EKDAVNESGQVEFGSY. Residue asparagine 200 is glycosylated (N-linked (GlcNAc...) asparagine). Residues 211–231 constitute an intramembrane region (pore-forming); that stretch reads ADALWWGVVTVTTIGYGDKVP. The Extracellular segment spans residues 232–233; that stretch reads QT. The chain crosses the membrane as a helical span at residues 234 to 259; the sequence is WVGKTIASCFSVFAISFFALPAGILG. The Cytoplasmic segment spans residues 260–582; the sequence is SGFALKVQQK…VPRRGPEEGS (323 aa). Positions 281-293 are interaction with CALM; sequence AAASLIQTAWRCY. Serine 318 and serine 320 each carry phosphoserine. The interval 426 to 440 is interaction with CALM; calcium-dependent; it reads KVIRRMQYFVAKKKF. The interval 446-483 is interaction with KCNE1 C-terminus; that stretch reads PYDVRDVIEQYSQGHLNLMVRIKELQRRLDQSIGKPSL. A coiled-coil region spans residues 496–532; the sequence is SNTIGARLNRVEDKVAQLDQRLVLITDMLQQLLSLHH. The interaction with AKAP9 stretch occupies residues 499-527; the sequence is IGARLNRVEDKVAQLDQRLVLITDMLQQL. Positions 500 to 531 are C-terminal assembly domain (tetramerization); the sequence is GARLNRVEDKVAQLDQRLVLITDMLQQLLSLH. A disordered region spans residues 530-582; that stretch reads LHHGGPPGSRPPSGGGAQVQPCGPTNPELFLPGNALPTYEQLTVPRRGPEEGS.

It belongs to the potassium channel family. KQT (TC 1.A.1.15) subfamily. Kv7.1/KCNQ1 sub-subfamily. Tetramer. Heterotetramer with KCNE1; targets to the membrane raft. Interacts (via C-terminus) with CALM; forms a heterooctameric structure (with 4:4 KCNQ1:CALM stoichiometry) in a calcium-independent manner. Interacts with AKAP9; targets protein kinase A (PKA) catalytic and regulatory subunits and protein phosphatase 1 (PP1) to the KCNQ1-KCNE1 complex, allowing PKA-mediated phosphorylation and increase of delayed rectifier potassium channel activity. Interacts with KCNE2; form a heterooligomer complex that targets to the membrane raft and leading to currents with an apparently instantaneous activation, a rapid deactivation process and a linear current-voltage relationship and decreases the amplitude of the outward current. Interacts with AP2M1; mediates estrogen-induced internalization via clathrin-coated vesicles. Interacts with NEDD4L; promotes internalization and decreases I(Ks) currents. Interacts with USP2; counteracts the NEDD4L-specific down-regulation of I(Ks) and restore plasma membrane localization. Heterotetramer with KCNQ5; has a voltage-gated potassium channel activity. Interacts with KCNE3; four KCNE3 molecules are bound to one KCNQ1 tetramer (4:4 KCNQ1:KCNE3 stoichiometry); alters membrane raft localization; affects KCNQ1 structure and gating properties. Interacts with KCNE4; impairs KCNQ1 localization in lipid rafts and inhibits voltage-gated potassium channel activity. Interacts with KCNE5; impairs KCNQ1 localization in lipid rafts and only conducts current upon strong and continued depolarization. In terms of processing, phosphorylated by PKA; increases delayed rectifier potassium channel activity of the KCNQ1-KCNE1 complex through a macromolecular complex that includes PKA, PP1, and the targeting protein AKAP9. Ubiquitinated by NEDD4L; promotes internalization. The ubiquitinylated form is internalized through a clathrin-mediated endocytosis by interacting with AP2M1 and is recycled back to the cell membrane via RAB4A and RAB11A. Post-translationally, deubiquitinated by USP2; counteracts the NEDD4L-specific down-regulation of I(Ks) and restores the membrane localization.

Its subcellular location is the cell membrane. It is found in the cytoplasmic vesicle membrane. It localises to the early endosome. The protein localises to the membrane raft. The protein resides in the endoplasmic reticulum. Its subcellular location is the basolateral cell membrane. It carries out the reaction K(+)(in) = K(+)(out). With respect to regulation, PIP2 molecule is essential to activate KCNQ channels by inducing the coupling of the voltage-sensing domain (VSD) and the pore-forming domain (PD). Upon channel activation, PIP2 disrupts the VSD-calmodulin/CALM interactions, causing the release of CALM from the VSD which triggers the opening of the gate. Calcium potentiates KCNQ1 channel current through calcium-bound CALM. Calcium-bound CALM competes with PIP2 to stabilize the channel open state. Its function is as follows. Pore-forming subunit of the voltage-gated potassium (Kv) channel involved in the regulation of cardiomyocyte excitability and important in normal development and functions of myocardium, inner ear, stomach and colon. Associates with KCNE beta subunits that modulates current kinetics. Induces a voltage-dependent by rapidly activating and slowly deactivating potassium-selective outward current. Also promotes a delayed voltage activated potassium current showing outward rectification characteristic. During beta-adrenergic receptor stimulation participates in cardiac repolarization by associating with KCNE1 to form the I(Ks) cardiac potassium current that increases the amplitude and slows down the activation kinetics of outward potassium current I(Ks). Muscarinic agonist oxotremorine-M strongly suppresses KCNQ1/KCNE1 current. When associated with KCNE3, forms the potassium channel that is important for cyclic AMP-stimulated intestinal secretion of chloride ions. This interaction with KCNE3 is reduced by 17beta-estradiol, resulting in the reduction of currents. During conditions of increased substrate load, maintains the driving force for proximal tubular and intestinal sodium ions absorption, gastric acid secretion, and cAMP-induced jejunal chloride ions secretion. Allows the provision of potassium ions to the luminal membrane of the secretory canaliculus in the resting state as well as during stimulated acid secretion. When associated with KCNE2, forms a heterooligomer complex leading to currents with an apparently instantaneous activation, a rapid deactivation process and a linear current-voltage relationship and decreases the amplitude of the outward current. When associated with KCNE4, inhibits voltage-gated potassium channel activity. When associated with KCNE5, this complex only conducts current upon strong and continued depolarization. Also forms a heterotetramer with KCNQ5 that has a voltage-gated potassium channel activity. Binds with phosphatidylinositol 4,5-bisphosphate. The sequence is that of Potassium voltage-gated channel subfamily KQT member 1 from Felis catus (Cat).